The sequence spans 218 residues: GILT-like protein ZK669.3 (218 aa).

The N-terminal stretch at 1-21 is a signal peptide; the sequence is MRRLNGVFICLILFITKISYA. N-linked (GlcNAc...) asparagine glycans are attached at residues asparagine 129 and asparagine 185.

It belongs to the GILT family.

It localises to the secreted. The chain is GILT-like protein ZK669.3 from Caenorhabditis elegans.